A 458-amino-acid polypeptide reads, in one-letter code: MLTVPKVPENFFSFFQEDYFPRLTPRGLNIADNVASLFNDYNLNSIDFTGFNLKLLRQNDIVLKNKVRYNFALQMGFDTVYAGKNTTILKFSLQAQTINFTSLQELRDSFENNGNTLSTHLFWKPVVEQLTTDGGNDLTNIAKTAIGESLFNLKVNLTDSIIDQSVLQQAQKSFEDKILDPFHAERVEAKRIHDEEARRLEAERKRIAAELKAKEDEARRIREEHWAFYQSTRDVKSFKEFWAKRGKNVADKKQLIEALKLSFQAKQNPTFELLTNAFRNAINWYYNHKKHDEEAKRTAFGSGGISFAQSGLNGIFMPNWLRWELINRANIQLQLQNVKVRENNFEVNGWGVPVSINWNDHNNGINYRATTPWTYGFEITMNYKGSYGLKGIYWTLANWGLGGIPPEWSGDMELKFQIDGKLANWITQKQDYPGSLFQFQNDKLLFTLHVVQRITVKD.

Belongs to the MG032/MG096/MG288 family.

This is an uncharacterized protein from Mycoplasma pneumoniae (strain ATCC 29342 / M129 / Subtype 1) (Mycoplasmoides pneumoniae).